A 219-amino-acid chain; its full sequence is Intraflagellar transport protein 22 (219 aa).

Residues 12-19 (GPSKSGKS) and 72-79 (WDVGGSSK) each bind GTP.

Belongs to the small GTPase superfamily. Rab family.

Its subcellular location is the cytoplasm. The protein localises to the cytoskeleton. It localises to the flagellum basal body. It is found in the cell projection. The protein resides in the cilium. Its subcellular location is the flagellum. Required for flagellum formation. The protein is Intraflagellar transport protein 22 (IFT22) of Trypanosoma brucei brucei (strain 927/4 GUTat10.1).